A 541-amino-acid polypeptide reads, in one-letter code: Testis-specific chromodomain protein Y 2 (541 aa).

The Chromo domain maps to 6–66 (FEVEAIVDKR…RQTEKQKKLT (61 aa)). The disordered stretch occupies residues 72-104 (RIFSNNARRRTSRSTKANYSKNSPKTPVTDKHH). Residues 87–97 (KANYSKNSPKT) show a composition bias toward polar residues.

Testis specific.

The protein localises to the nucleus. The catalysed reaction is L-lysyl-[protein] + acetyl-CoA = N(6)-acetyl-L-lysyl-[protein] + CoA + H(+). In terms of biological role, may have histone acetyltransferase activity. This is Testis-specific chromodomain protein Y 2 (CDY2A) from Homo sapiens (Human).